The chain runs to 158 residues: Transcription elongation factor GreA (158 aa).

Positions 45-72 (AEYHAAREQQSFIEGRIKQLEGELSHAE) form a coiled coil.

Belongs to the GreA/GreB family.

In terms of biological role, necessary for efficient RNA polymerase transcription elongation past template-encoded arresting sites. The arresting sites in DNA have the property of trapping a certain fraction of elongating RNA polymerases that pass through, resulting in locked ternary complexes. Cleavage of the nascent transcript by cleavage factors such as GreA or GreB allows the resumption of elongation from the new 3'terminus. GreA releases sequences of 2 to 3 nucleotides. The polypeptide is Transcription elongation factor GreA (Xylella fastidiosa (strain 9a5c)).